The chain runs to 273 residues: 2,3,4,5-tetrahydropyridine-2,6-dicarboxylate N-succinyltransferase (273 aa).

Substrate contacts are provided by Arg105 and Asp142.

This sequence belongs to the transferase hexapeptide repeat family. In terms of assembly, homotrimer.

Its subcellular location is the cytoplasm. The enzyme catalyses (S)-2,3,4,5-tetrahydrodipicolinate + succinyl-CoA + H2O = (S)-2-succinylamino-6-oxoheptanedioate + CoA. It functions in the pathway amino-acid biosynthesis; L-lysine biosynthesis via DAP pathway; LL-2,6-diaminopimelate from (S)-tetrahydrodipicolinate (succinylase route): step 1/3. This is 2,3,4,5-tetrahydropyridine-2,6-dicarboxylate N-succinyltransferase from Bordetella parapertussis (strain 12822 / ATCC BAA-587 / NCTC 13253).